Consider the following 237-residue polypeptide: Purine nucleoside phosphorylase DeoD-type (237 aa).

A purine D-ribonucleoside is bound at residue H4. Residues G20, R24, R43, and 87-90 (RVGS) each bind phosphate. A purine D-ribonucleoside contacts are provided by residues 179-181 (EME) and 203-204 (SD). The Proton donor role is filled by D204.

The protein belongs to the PNP/UDP phosphorylase family. In terms of assembly, homohexamer; trimer of homodimers.

The enzyme catalyses a purine D-ribonucleoside + phosphate = a purine nucleobase + alpha-D-ribose 1-phosphate. The catalysed reaction is a purine 2'-deoxy-D-ribonucleoside + phosphate = a purine nucleobase + 2-deoxy-alpha-D-ribose 1-phosphate. Its function is as follows. Catalyzes the reversible phosphorolytic breakdown of the N-glycosidic bond in the beta-(deoxy)ribonucleoside molecules, with the formation of the corresponding free purine bases and pentose-1-phosphate. This Dichelobacter nodosus (strain VCS1703A) protein is Purine nucleoside phosphorylase DeoD-type.